Consider the following 230-residue polypeptide: Cytidylate kinase (230 aa).

An ATP-binding site is contributed by 17 to 25 (GPTASGKGT).

The protein belongs to the cytidylate kinase family. Type 1 subfamily.

The protein resides in the cytoplasm. The enzyme catalyses CMP + ATP = CDP + ADP. It catalyses the reaction dCMP + ATP = dCDP + ADP. This is Cytidylate kinase from Ralstonia nicotianae (strain ATCC BAA-1114 / GMI1000) (Ralstonia solanacearum).